The sequence spans 475 residues: Aspartyl/glutamyl-tRNA(Asn/Gln) amidotransferase subunit B (475 aa).

This sequence belongs to the GatB/GatE family. GatB subfamily. As to quaternary structure, heterotrimer of A, B and C subunits.

It carries out the reaction L-glutamyl-tRNA(Gln) + L-glutamine + ATP + H2O = L-glutaminyl-tRNA(Gln) + L-glutamate + ADP + phosphate + H(+). The catalysed reaction is L-aspartyl-tRNA(Asn) + L-glutamine + ATP + H2O = L-asparaginyl-tRNA(Asn) + L-glutamate + ADP + phosphate + 2 H(+). Its function is as follows. Allows the formation of correctly charged Asn-tRNA(Asn) or Gln-tRNA(Gln) through the transamidation of misacylated Asp-tRNA(Asn) or Glu-tRNA(Gln) in organisms which lack either or both of asparaginyl-tRNA or glutaminyl-tRNA synthetases. The reaction takes place in the presence of glutamine and ATP through an activated phospho-Asp-tRNA(Asn) or phospho-Glu-tRNA(Gln). This chain is Aspartyl/glutamyl-tRNA(Asn/Gln) amidotransferase subunit B, found in Pediococcus pentosaceus (strain ATCC 25745 / CCUG 21536 / LMG 10740 / 183-1w).